A 2053-amino-acid chain; its full sequence is MWLVTFLLLLDSLHKARPEDVGTSLYFVNDSLQQVTFSSSVGVVVPCPAAGSPSAALRWYLATGDDIYDVPHIRHVHANGTLQLYPFSPSAFNSFIHDNDYFCTAENAAGKIRSPNIRVKAVFREPYTVRVEDQRSMRGNVAVFKCLIPSSVQEYVSVVSWEKDTVSIIPEHRFFITYHGGLYISDVQKEDALSTYRCITKHKYSGETRQSNGARLSVTDPAESIPTILDGFHSQEVWAGHTVELPCTASGYPIPAIRWLKDGRPLPADSRWTKRITGLTISDLRTEDSGTYICEVTNTFGSAEATGILMVIDPLHVTLTPKKLKTGIGSTVILSCALTGSPEFTIRWYRNTELVLPDEAISIRGLSNETLLITSAQKSHSGAYQCFATRKAQTAQDFAIIALEDGTPRIVSSFSEKVVNPGEQFSLMCAAKGAPPPTVTWALDDEPIVRDGSHRTNQYTMSDGTTISHMNVTGPQIRDGGVYRCTARNLVGSAEYQARINVRGPPSIRAMRNITAVAGRDTLINCRVIGYPYYSIKWYKDALLLPDNHRQVVFENGTLKLTDVQKGMDEGEYLCSVLIQPQLSISQSVHVAVKVPPLIQPFEFPPASIGQLLYIPCVVSSGDMPIRITWRKDGQVIISGSGVTIESKEFMSSLQISSVSLKHNGNYTCIASNAAATVSRERQLIVRVPPRFVVQPNNQDGIYGKAGVLNCSVDGYPPPKVMWKHAKGSGNPQQYHPVPLTGRIQILPNSSLLIRHVLEEDIGYYLCQASNGVGTDISKSMFLTVKIPAMITSHPNTTIAIKGHAKELNCTARGERPIIIRWEKGDTVIDPDRVMRYAIATKDNGDEVVSTLKLKPADRGDSVFFSCHAINSYGEDRGLIQLTVQEPPDPPELEIREVKARSMNLRWTQRFDGNSIITGFDIEYKNKSDSWDFKQSTRNISPTINQANIVDLHPASVYSIRMYSFNKIGRSEPSKELTISTEEAAPDGPPMDVTLQPVTSQSIQVTWKAPKKELQNGVIRGYQIGYRENSPGSNGQYSIVEMKATGDSEVYTLDNLKKFAQYGVVVQAFNRAGTGPSSSEINATTLEDVPSQPPENVRALSITSDVAVISWSEPPRSTLNGVLKGYRVIFWSLYVDGEWGEMQNITTTRERVELRGMEKFTNYSVQVLAYTQAGDGVRSSVLYIQTKEDVPGPPAGIKAVPSSASSVVVSWLPPTKPNGVIRKYTIFCSSPGSGQPAPSEYETSPEQLFYRIAHLNRGQQYLLWVAAVTSAGRGNSSEKVTIEPAGKAPAKIISFGGTVTTPWMKDVRLPCNSVGDPAPAVKWTKDSEDSAIPVSMDGHRLIHTNGTLLLRAVKAEDSGYYTCTATNTGGFDTIIVNLLVQVPPDQPRLTVSKTSASSITLTWIPGDNGGSSIRGFVLQYSVDNSEEWKDVFISSSERSFKLDSLKCGTWYKVKLAAKNSVGSGRISEIIEAKTHGREPSFSKDQHLFTHINSTHARLNLQGWNNGGCPITAIVLEYRPKGTWAWQGLRANSSGEVFLTELREATWYELRMRACNSAGCGNETAQFATLDYDGSTIPPIKSAQGEGDDVKKLFTIGCPVILATLGVALLFIVRKKRKEKRLKRLRDAKSLAEMLISKNNRSFDTPVKGPPQGPRLHIDIPRVQLLIEDKEGIKQLGDDKATIPVTDAEFSQAVNPQSFCTGVSLHHPTLIQSTGPLIDMSDIRPGTNPVSRKNVKSAHSTRNRYSSQWTLTKCQASTPARTLTSDWRTVGSQHGVTVTESDSYSASLSQDTDKGRNSMVSTESASSTYEELARAYEHAKLEEQLQHAKFEITECFISDSSSDQMTTGTNENADSMTSMSTPSEPGICRFTASPPKPQDADRGKNVAVPIPHRANKSDYCNLPLYAKSEAFFRKADGREPCPVVPPREASIRNLARTYHTQARHLTLDPASKSLGLPHPGAPAAASTATLPQRTLAMPAPPAGTAPPAPGPTPAEPPTAPSAAPPAPSTEPPRAGGPHTKMGGSRDSLLEMSTSGVGRSQKQGAGAYSKSYTLV.

The N-terminal stretch at Met-1–Pro-18 is a signal peptide. Ig-like C2-type domains lie at Glu-19–Val-119, Pro-115–Ser-217, Pro-226–Thr-306, Pro-314–Ala-402, Pro-408–Asn-501, Pro-506–Ser-586, Pro-596–Ile-685, Pro-690–Thr-784, and Pro-788–Gln-885. The Extracellular segment spans residues Glu-19–Lys-1591. Residues Asn-29 and Asn-79 are each glycosylated (N-linked (GlcNAc...) asparagine). 5 cysteine pairs are disulfide-bonded: Cys-47-Cys-103, Cys-146-Cys-198, Cys-247-Cys-294, Cys-336-Cys-386, and Cys-429-Cys-485. N-linked (GlcNAc...) asparagine glycosylation is found at Asn-368, Asn-471, Asn-513, Asn-556, Asn-666, Asn-710, Asn-749, Asn-796, and Asn-809. Cystine bridges form between Cys-526–Cys-575 and Cys-617–Cys-669. An intrachain disulfide couples Cys-711 to Cys-767. A disulfide bridge links Cys-810 with Cys-867. Fibronectin type-III domains follow at residues Pro-887–Ala-984, Pro-989–Asp-1088, Pro-1093–Asp-1189, and Pro-1193–Ala-1288. Asn-926, Asn-1082, Asn-1144, Asn-1162, Asn-1275, and Asn-1345 each carry an N-linked (GlcNAc...) asparagine glycan. Positions Glu-1278–Asn-1377 constitute an Ig-like C2-type 10 domain. Cys-1311 and Cys-1363 are disulfide-bonded. Fibronectin type-III domains are found at residues Pro-1383–Arg-1477 and Glu-1478–Pro-1578. N-linked (GlcNAc...) asparagine glycosylation is found at Asn-1492, Asn-1531, and Asn-1561. The chain crosses the membrane as a helical span at residues Leu-1592 to Val-1612. Residues Arg-1613–Val-2053 are Cytoplasmic-facing. Disordered regions lie at residues Pro-1715 to Arg-1741, His-1773 to Ser-1803, Ser-1840 to Ser-1862, and Leu-1974 to Val-2053. Residues Lys-1732–Arg-1741 are compositionally biased toward basic residues. Polar residues predominate over residues His-1773–Gln-1789. Pro residues predominate over residues Pro-1977–Glu-2009. Over residues Glu-2029 to Gln-2041 the composition is skewed to polar residues.

As to quaternary structure, homodimer; mediates homophilic interactions to promote cell adhesion. In terms of tissue distribution, detected in heart, liver, pancreas, skeletal muscle, kidney and in brain, in particular in the amygdala, caudate nucleus, corpus callosum, hippocampus, substantia nigra, thalamus and subthalamus.

It localises to the cell membrane. It is found in the synapse. Its function is as follows. Cell adhesion molecule that plays a role in neuronal self-avoidance. Promotes repulsion between specific neuronal processes of either the same cell or the same subtype of cells. Promotes both isoneuronal self-avoidance for creating an orderly neurite arborization in retinal rod bipolar cells and heteroneuronal self-avoidance to maintain mosaic spacing between AII amacrine cells. Adhesion molecule that promotes lamina-specific synaptic connections in the retina: expressed in specific subsets of interneurons and retinal ganglion cells (RGCs) and promotes synaptic connectivity via homophilic interactions. The chain is Cell adhesion molecule DSCAML1 (DSCAML1) from Homo sapiens (Human).